The sequence spans 148 residues: Snaclec 4 (148 aa).

Residues 1 to 23 (MGRFIFVSFSLLVVFFSLSGTEA) form the signal peptide. The 115-residue stretch at 34 to 148 (YDQNCYKAFE…DTQFRLQEPG (115 aa)) folds into the C-type lectin domain.

The protein belongs to the snaclec family. As to quaternary structure, heterodimer; disulfide-linked. Contains disulfide bonds. In terms of tissue distribution, expressed by the venom gland.

The protein resides in the secreted. In terms of biological role, interferes with one step of hemostasis (modulation of platelet aggregation, or coagulation cascade, for example). The sequence is that of Snaclec 4 from Echis pyramidum leakeyi (Leakey's carpet viper).